A 29-amino-acid chain; its full sequence is Varv peptide D (29 aa).

Positions 1–29 (GLPICGETCVGGSCNTPGCSCSWPVCTRN) form a cross-link, cyclopeptide (Gly-Asn). 3 disulfides stabilise this stretch: cysteine 5-cysteine 19, cysteine 9-cysteine 21, and cysteine 14-cysteine 26.

Post-translationally, this is a cyclic peptide.

In terms of biological role, probably participates in a plant defense mechanism. The sequence is that of Varv peptide D from Viola arvensis (European field pansy).